A 778-amino-acid chain; its full sequence is Glutathione biosynthesis bifunctional protein GshAB (778 aa).

The tract at residues 1–354 is glutamate--cysteine ligase; that stretch reads MVNLDKGLLK…EEFFKNHDMV (354 aa). Positions 521–777 constitute an ATP-grasp domain; sequence KDILRENNIR…AGEKILDLLF (257 aa). Residue 548–606 coordinates ATP; the sequence is RLFKDEKIVIKPKSTNFGLGISIFPGEYSREDYDKAVEIAFREDSSILIEEFMTGKEYR. Mg(2+) is bound by residues Asp728, Glu747, and Asn749. Residues Asp728, Glu747, and Asn749 each contribute to the Mn(2+) site.

The protein in the N-terminal section; belongs to the glutamate--cysteine ligase type 1 family. Type 2 subfamily. In terms of assembly, monomer. Mg(2+) serves as cofactor. Mn(2+) is required as a cofactor.

The catalysed reaction is L-cysteine + L-glutamate + ATP = gamma-L-glutamyl-L-cysteine + ADP + phosphate + H(+). It catalyses the reaction gamma-L-glutamyl-L-cysteine + glycine + ATP = glutathione + ADP + phosphate + H(+). It participates in sulfur metabolism; glutathione biosynthesis; glutathione from L-cysteine and L-glutamate: step 1/2. The protein operates within sulfur metabolism; glutathione biosynthesis; glutathione from L-cysteine and L-glutamate: step 2/2. Its function is as follows. Synthesizes glutathione from L-glutamate and L-cysteine via gamma-L-glutamyl-L-cysteine. The polypeptide is Glutathione biosynthesis bifunctional protein GshAB (Clostridium perfringens (strain 13 / Type A)).